A 505-amino-acid polypeptide reads, in one-letter code: Deoxyguanosinetriphosphate triphosphohydrolase (505 aa).

The HD domain maps to 66 to 273 (RLTHSMEVQQ…MEAADDISYC (208 aa)).

The protein belongs to the dGTPase family. Type 1 subfamily. Homotetramer. The cofactor is Mg(2+).

It carries out the reaction dGTP + H2O = 2'-deoxyguanosine + triphosphate + H(+). Its function is as follows. dGTPase preferentially hydrolyzes dGTP over the other canonical NTPs. The sequence is that of Deoxyguanosinetriphosphate triphosphohydrolase from Shigella boydii serotype 4 (strain Sb227).